We begin with the raw amino-acid sequence, 104 residues long: Large ribosomal subunit protein uL24 (104 aa).

It belongs to the universal ribosomal protein uL24 family. As to quaternary structure, part of the 50S ribosomal subunit.

Its function is as follows. One of two assembly initiator proteins, it binds directly to the 5'-end of the 23S rRNA, where it nucleates assembly of the 50S subunit. One of the proteins that surrounds the polypeptide exit tunnel on the outside of the subunit. The chain is Large ribosomal subunit protein uL24 from Clostridium botulinum (strain Alaska E43 / Type E3).